The chain runs to 213 residues: Orotate phosphoribosyltransferase (213 aa).

Lysine 26 contacts 5-phospho-alpha-D-ribose 1-diphosphate. An orotate-binding site is contributed by 34–35; the sequence is FF. 5-phospho-alpha-D-ribose 1-diphosphate-binding positions include 72-73, arginine 99, lysine 100, lysine 103, histidine 105, and 124-132; these read YK and DDVITAGTA. Orotate is bound by residues threonine 128 and arginine 156.

It belongs to the purine/pyrimidine phosphoribosyltransferase family. PyrE subfamily. Homodimer. The cofactor is Mg(2+).

It carries out the reaction orotidine 5'-phosphate + diphosphate = orotate + 5-phospho-alpha-D-ribose 1-diphosphate. The protein operates within pyrimidine metabolism; UMP biosynthesis via de novo pathway; UMP from orotate: step 1/2. Functionally, catalyzes the transfer of a ribosyl phosphate group from 5-phosphoribose 1-diphosphate to orotate, leading to the formation of orotidine monophosphate (OMP). The sequence is that of Orotate phosphoribosyltransferase from Shigella flexneri.